A 208-amino-acid chain; its full sequence is Guanylate kinase (208 aa).

Residues 5–184 (GLLIVFSGPS…AAERVKCVIE (180 aa)) form the Guanylate kinase-like domain. 12–19 (GPSGVGKG) is an ATP binding site.

The protein belongs to the guanylate kinase family.

It is found in the cytoplasm. The enzyme catalyses GMP + ATP = GDP + ADP. Functionally, essential for recycling GMP and indirectly, cGMP. This chain is Guanylate kinase, found in Streptococcus pneumoniae (strain ATCC BAA-255 / R6).